The following is a 63-amino-acid chain: Large ribosomal subunit protein uL29 (63 aa).

It belongs to the universal ribosomal protein uL29 family.

The polypeptide is Large ribosomal subunit protein uL29 (Herminiimonas arsenicoxydans).